Reading from the N-terminus, the 156-residue chain is Small ribosomal subunit protein uS7 (156 aa).

The protein belongs to the universal ribosomal protein uS7 family. In terms of assembly, part of the 30S ribosomal subunit. Contacts proteins S9 and S11.

Its function is as follows. One of the primary rRNA binding proteins, it binds directly to 16S rRNA where it nucleates assembly of the head domain of the 30S subunit. Is located at the subunit interface close to the decoding center, probably blocks exit of the E-site tRNA. The sequence is that of Small ribosomal subunit protein uS7 from Cellvibrio japonicus (strain Ueda107) (Pseudomonas fluorescens subsp. cellulosa).